Consider the following 61-residue polypeptide: Large ribosomal subunit protein bL32 (61 aa).

The segment covering 1-16 has biased composition (basic residues); it reads MAVPKRKTSPSRRGMR. Residues 1–61 are disordered; that stretch reads MAVPKRKTSP…RQILKPKAEA (61 aa). Over residues 28 to 44 the composition is skewed to basic and acidic residues; that stretch reads VEDKDSGELRRPHHLDL.

It belongs to the bacterial ribosomal protein bL32 family.

The protein is Large ribosomal subunit protein bL32 of Xanthobacter autotrophicus (strain ATCC BAA-1158 / Py2).